Consider the following 818-residue polypeptide: LPS-assembly protein LptD (818 aa).

The first 33 residues, 1-33 (MVNETMKHQFKFNPLATAIFTLLCSGSIQSSYA), serve as a signal peptide directing secretion.

Belongs to the LptD family. In terms of assembly, component of the lipopolysaccharide transport and assembly complex. Interacts with LptE and LptA.

It is found in the cell outer membrane. Functionally, together with LptE, is involved in the assembly of lipopolysaccharide (LPS) at the surface of the outer membrane. The sequence is that of LPS-assembly protein LptD from Acinetobacter baumannii (strain ATCC 19606 / DSM 30007 / JCM 6841 / CCUG 19606 / CIP 70.34 / NBRC 109757 / NCIMB 12457 / NCTC 12156 / 81).